Here is a 227-residue protein sequence, read N- to C-terminus: Cytochrome c oxidase subunit 2 (227 aa).

The Mitochondrial intermembrane segment spans residues methionine 1–serine 14. The helical transmembrane segment at proline 15 to methionine 45 threads the bilayer. The Mitochondrial matrix portion of the chain corresponds to leucine 46–glutamine 59. Residues glutamate 60–methionine 87 form a helical membrane-spanning segment. Topologically, residues aspartate 88–isoleucine 227 are mitochondrial intermembrane. Cu cation is bound by residues histidine 161, cysteine 196, glutamate 198, cysteine 200, histidine 204, and methionine 207. Mg(2+) is bound at residue glutamate 198. A Phosphotyrosine modification is found at tyrosine 218.

It belongs to the cytochrome c oxidase subunit 2 family. Component of the cytochrome c oxidase (complex IV, CIV), a multisubunit enzyme composed of 14 subunits. The complex is composed of a catalytic core of 3 subunits MT-CO1, MT-CO2 and MT-CO3, encoded in the mitochondrial DNA, and 11 supernumerary subunits COX4I, COX5A, COX5B, COX6A, COX6B, COX6C, COX7A, COX7B, COX7C, COX8 and NDUFA4, which are encoded in the nuclear genome. The complex exists as a monomer or a dimer and forms supercomplexes (SCs) in the inner mitochondrial membrane with NADH-ubiquinone oxidoreductase (complex I, CI) and ubiquinol-cytochrome c oxidoreductase (cytochrome b-c1 complex, complex III, CIII), resulting in different assemblies (supercomplex SCI(1)III(2)IV(1) and megacomplex MCI(2)III(2)IV(2)). Found in a complex with TMEM177, COA6, COX18, COX20, SCO1 and SCO2. Interacts with TMEM177 in a COX20-dependent manner. Interacts with COX20. Interacts with COX16. Cu cation is required as a cofactor.

It localises to the mitochondrion inner membrane. The enzyme catalyses 4 Fe(II)-[cytochrome c] + O2 + 8 H(+)(in) = 4 Fe(III)-[cytochrome c] + 2 H2O + 4 H(+)(out). Its function is as follows. Component of the cytochrome c oxidase, the last enzyme in the mitochondrial electron transport chain which drives oxidative phosphorylation. The respiratory chain contains 3 multisubunit complexes succinate dehydrogenase (complex II, CII), ubiquinol-cytochrome c oxidoreductase (cytochrome b-c1 complex, complex III, CIII) and cytochrome c oxidase (complex IV, CIV), that cooperate to transfer electrons derived from NADH and succinate to molecular oxygen, creating an electrochemical gradient over the inner membrane that drives transmembrane transport and the ATP synthase. Cytochrome c oxidase is the component of the respiratory chain that catalyzes the reduction of oxygen to water. Electrons originating from reduced cytochrome c in the intermembrane space (IMS) are transferred via the dinuclear copper A center (CU(A)) of subunit 2 and heme A of subunit 1 to the active site in subunit 1, a binuclear center (BNC) formed by heme A3 and copper B (CU(B)). The BNC reduces molecular oxygen to 2 water molecules using 4 electrons from cytochrome c in the IMS and 4 protons from the mitochondrial matrix. This chain is Cytochrome c oxidase subunit 2 (MT-CO2), found in Micaelamys namaquensis (Namaqua rock rat).